The sequence spans 337 residues: Ornithine carbamoyltransferase (337 aa).

Carbamoyl phosphate is bound by residues 56–59 (STRT), Gln83, Arg107, and 134–137 (HPTQ). L-ornithine is bound by residues Asn168, Asp232, and 236-237 (SM). Residues 274 to 275 (CL) and Arg320 contribute to the carbamoyl phosphate site.

Belongs to the aspartate/ornithine carbamoyltransferase superfamily. OTCase family.

The protein localises to the cytoplasm. It carries out the reaction carbamoyl phosphate + L-ornithine = L-citrulline + phosphate + H(+). It functions in the pathway amino-acid biosynthesis; L-arginine biosynthesis; L-arginine from L-ornithine and carbamoyl phosphate: step 1/3. Functionally, reversibly catalyzes the transfer of the carbamoyl group from carbamoyl phosphate (CP) to the N(epsilon) atom of ornithine (ORN) to produce L-citrulline. In Shigella flexneri serotype 5b (strain 8401), this protein is Ornithine carbamoyltransferase.